The sequence spans 96 residues: Large ribosomal subunit protein bL25 (96 aa).

It belongs to the bacterial ribosomal protein bL25 family. As to quaternary structure, part of the 50S ribosomal subunit; part of the 5S rRNA/L5/L18/L25 subcomplex. Contacts the 5S rRNA. Binds to the 5S rRNA independently of L5 and L18.

This is one of the proteins that binds to the 5S RNA in the ribosome where it forms part of the central protuberance. In Buchnera aphidicola subsp. Schizaphis graminum (strain Sg), this protein is Large ribosomal subunit protein bL25.